The primary structure comprises 253 residues: Vitamin B12 import ATP-binding protein BtuD (253 aa).

An ABC transporter domain is found at 4-236; the sequence is LQLNNVSVGT…DVLSQVFEVD (233 aa). 32–39 is a binding site for ATP; the sequence is GPNGAGKS.

This sequence belongs to the ABC transporter superfamily. Vitamin B12 importer (TC 3.A.1.13.1) family. In terms of assembly, the complex is composed of two ATP-binding proteins (BtuD), two transmembrane proteins (BtuC) and a solute-binding protein (BtuF).

It localises to the cell inner membrane. The enzyme catalyses an R-cob(III)alamin(out) + ATP + H2O = an R-cob(III)alamin(in) + ADP + phosphate + H(+). Functionally, part of the ABC transporter complex BtuCDF involved in vitamin B12 import. Responsible for energy coupling to the transport system. This chain is Vitamin B12 import ATP-binding protein BtuD, found in Yersinia pestis.